The chain runs to 53 residues: Ovomucoid (53 aa).

Positions 3–53 (VDCSEYPKPGCMMERLPLCGSDNKTYNDKCNFCNAVVESNGTLTLNHFGEC) constitute a Kazal-like domain. Intrachain disulfides connect cysteine 5–cysteine 35, cysteine 13–cysteine 32, and cysteine 21–cysteine 53. N-linked (GlcNAc...) asparagine glycosylation is present at asparagine 42.

The protein localises to the secreted. The sequence is that of Ovomucoid from Turnix sylvaticus (Common buttonquail).